Reading from the N-terminus, the 201-residue chain is Recombination protein RecR (201 aa).

The C4-type zinc finger occupies 57 to 72 (CTHCRTFTEEESCAIC). A Toprim domain is found at 81-176 (GFLCVVEQPS…KVSRIAHGIP (96 aa)).

The protein belongs to the RecR family.

Functionally, may play a role in DNA repair. It seems to be involved in an RecBC-independent recombinational process of DNA repair. It may act with RecF and RecO. This chain is Recombination protein RecR, found in Histophilus somni (strain 2336) (Haemophilus somnus).